Consider the following 115-residue polypeptide: UPF0122 protein lp_1634 (115 aa).

The protein belongs to the UPF0122 family.

Its function is as follows. Might take part in the signal recognition particle (SRP) pathway. This is inferred from the conservation of its genetic proximity to ftsY/ffh. May be a regulatory protein. This chain is UPF0122 protein lp_1634, found in Lactiplantibacillus plantarum (strain ATCC BAA-793 / NCIMB 8826 / WCFS1) (Lactobacillus plantarum).